Consider the following 246-residue polypeptide: MGCFECCIKCLGGVPYASLLATILCFSGVALFCGCGHVALTKVERIVQLYFSNNASDHVLLTDVIQMMHYVIYGVASFSFLYGIILLAEGFYTTSAVKEIHGEFKTTVCGRCISGMSVFLTYLLGIAWLGVFGFSAVPAFIYYNMWSACQTISSPPVNLTTVIEEICVDVRQYGIIPWNASPGKACGSTLTTICNTSEFDLSYHLFIVACAGAGATVIALLIYMMATTYNFAVLKFKSREDCCTKF.

A run of 4 helical transmembrane segments spans residues 19 to 35 (LLAT…FCGC), 71 to 87 (VIYG…IILL), 118 to 134 (VFLT…VFGF), and 206 to 222 (FIVA…ALLI).

It belongs to the myelin proteolipid protein family. Highly expressed in white matter in myelinating shark brain.

Its subcellular location is the membrane. In Squalus acanthias (Spiny dogfish), this protein is Proteolipid protein DM gamma.